Here is a 332-residue protein sequence, read N- to C-terminus: Ornithine carbamoyltransferase, catabolic (332 aa).

Residues 60–63, Gln-87, Arg-111, and 138–141 each bind carbamoyl phosphate; these read STRT and HPTQ. L-ornithine is bound by residues Asn-170, Asp-230, and 234–235; that span reads SM. Residues 271-272 and Arg-316 each bind carbamoyl phosphate; that span reads CL.

It belongs to the aspartate/ornithine carbamoyltransferase superfamily. OTCase family.

It localises to the cytoplasm. It catalyses the reaction carbamoyl phosphate + L-ornithine = L-citrulline + phosphate + H(+). It participates in amino-acid degradation; L-arginine degradation via ADI pathway; carbamoyl phosphate from L-arginine: step 2/2. Functionally, reversibly catalyzes the transfer of the carbamoyl group from carbamoyl phosphate (CP) to the N(epsilon) atom of ornithine (ORN) to produce L-citrulline. This Bacillus cereus (strain ATCC 10987 / NRS 248) protein is Ornithine carbamoyltransferase, catabolic.